We begin with the raw amino-acid sequence, 241 residues long: 2,3,4,5-tetrahydropyridine-2,6-dicarboxylate N-acetyltransferase (241 aa).

The protein belongs to the transferase hexapeptide repeat family. DapH subfamily.

It catalyses the reaction (S)-2,3,4,5-tetrahydrodipicolinate + acetyl-CoA + H2O = L-2-acetamido-6-oxoheptanedioate + CoA. Its pathway is amino-acid biosynthesis; L-lysine biosynthesis via DAP pathway; LL-2,6-diaminopimelate from (S)-tetrahydrodipicolinate (acetylase route): step 1/3. In terms of biological role, catalyzes the transfer of an acetyl group from acetyl-CoA to tetrahydrodipicolinate. The protein is 2,3,4,5-tetrahydropyridine-2,6-dicarboxylate N-acetyltransferase of Thermoanaerobacter pseudethanolicus (strain ATCC 33223 / 39E) (Clostridium thermohydrosulfuricum).